Consider the following 154-residue polypeptide: Aspartate carbamoyltransferase regulatory chain (154 aa).

Residues C109, C114, C138, and C141 each coordinate Zn(2+).

This sequence belongs to the PyrI family. In terms of assembly, contains catalytic and regulatory chains. Zn(2+) is required as a cofactor.

In terms of biological role, involved in allosteric regulation of aspartate carbamoyltransferase. In Tolumonas auensis (strain DSM 9187 / NBRC 110442 / TA 4), this protein is Aspartate carbamoyltransferase regulatory chain.